The primary structure comprises 198 residues: Nucleoid occlusion factor SlmA (198 aa).

The HTH tetR-type domain occupies 10–70 (NRREEILQSL…SLIEFIEDSL (61 aa)). The H-T-H motif DNA-binding region spans 33–52 (TTAKLAASVGVSEAALYRHF). Residues 119-144 (DRLQGRINQLFERIEVQLRQVMREKK) adopt a coiled-coil conformation.

This sequence belongs to the nucleoid occlusion factor SlmA family. Homodimer. Interacts with FtsZ.

Its subcellular location is the cytoplasm. The protein resides in the nucleoid. Required for nucleoid occlusion (NO) phenomenon, which prevents Z-ring formation and cell division over the nucleoid. Acts as a DNA-associated cell division inhibitor that binds simultaneously chromosomal DNA and FtsZ, and disrupts the assembly of FtsZ polymers. SlmA-DNA-binding sequences (SBS) are dispersed on non-Ter regions of the chromosome, preventing FtsZ polymerization at these regions. This is Nucleoid occlusion factor SlmA from Klebsiella pneumoniae (strain 342).